The following is a 633-amino-acid chain: Probable extracellular metalloproteinase 5 (633 aa).

Positions 1–20 (MHGLLLAAAGLLSLPLHVLA) are cleaved as a signal peptide. A propeptide spanning residues 21-244 (HPQPSTNLAG…VHNVVDYVSH (224 aa)) is cleaved from the precursor. N-linked (GlcNAc...) asparagine glycosylation occurs at Asn-285. His-428 serves as a coordination point for Zn(2+). The active site involves Glu-429. Position 432 (His-432) interacts with Zn(2+). Residues Asn-592 and Asn-621 are each glycosylated (N-linked (GlcNAc...) asparagine).

It belongs to the peptidase M36 family. Requires Zn(2+) as cofactor.

Its subcellular location is the secreted. Secreted metalloproteinase probably acting as a virulence factor. In Trichophyton verrucosum (strain HKI 0517), this protein is Probable extracellular metalloproteinase 5 (MEP5).